Reading from the N-terminus, the 61-residue chain is Large ribosomal subunit protein uL30 (61 aa).

It belongs to the universal ribosomal protein uL30 family. Part of the 50S ribosomal subunit.

The protein is Large ribosomal subunit protein uL30 of Lactobacillus acidophilus (strain ATCC 700396 / NCK56 / N2 / NCFM).